An 888-amino-acid chain; its full sequence is E3 ubiquitin-protein ligase SH3RF1 (888 aa).

Residues 12 to 53 form an RING-type zinc finger; the sequence is CPVCLERLDASAKVLPCQHTFCKRCLLGIVGSRNELRCPECR. Polar residues predominate over residues 108 to 127; it reads SSKDLQSSQGGQQPRVQSWS. The interval 108 to 128 is disordered; it reads SSKDLQSSQGGQQPRVQSWSP. 2 SH3 domains span residues 134–193 and 196–259; these read PQLP…IIKP and QPPP…FNSA. The segment at 275–321 is disordered; sequence DAGECSSAAAQSSTAPKHSDTKKNTKKRHSFTSLTMANKSSQASQNR. The segment at 292 to 362 is interaction with RAC1; sequence HSDTKKNTKK…APSQVHISTT (71 aa). Ser-304 is subject to Phosphoserine. Positions 305-321 are enriched in polar residues; the sequence is FTSLTMANKSSQASQNR. The tract at residues 440–543 is interaction with AKT2; that stretch reads HLRPQTRPSV…STAGGPAQKL (104 aa). One can recognise an SH3 3 domain in the interval 445–506; the sequence is TRPSVYVAIY…PGNYVAPVTR (62 aa). Disordered regions lie at residues 516 to 548, 620 to 639, and 684 to 741; these read VPMS…GNGV, SVGL…LMPG, and TVLP…ASPT. Residues 520-535 are compositionally biased toward polar residues; that stretch reads TAGQTSRGVTMVSPST. A Phosphoserine modification is found at Ser-532. The segment covering 692-704 has biased composition (polar residues); the sequence is SPDSASSACGNSS. Residues 707-718 are compositionally biased toward basic and acidic residues; that stretch reads KPDKDSKKEKKG. At Ser-735 the chain carries Phosphoserine. Residues 829 to 888 form the SH3 4 domain; sequence VVCERHRVVVSYPPQSEAELELKEGDIVFVHKKREDGWFKGTLQRNGKTGLFPGSFVENI.

This sequence belongs to the SH3RF family. As to quaternary structure, interacts with RAC1; in a GTP-dependent manner. Interacts with MAP3K10/MLK2 and MAP3K11/MLK3. Interacts with MAPK8IP; this interaction leads to the PJAC complex (POSH-JIP or SH3RF1/MAPK8IP apoptotic complex) with a 1:1 ratio. Interacts with SIAH1. Interacts with HERP1. Probably part of a signaling complex that may contain SH3RF1, MAPK8IP, DLK1, MAP2K4/MKK4, MAP2K7/MKK7, MAPK8/JNK1, MAPK9/JNK2, AKT1 and AKT2. Found in a complex with RAC2, MAP3K7/TAK1, MAP2K7/MKK7, MAPK8IP1/JIP1, MAPK8/JNK1 and MAPK9/JNK2. Found in a complex with RAC1, MAP3K11/MLK3, MAP2K7/MKK7, MAPK8IP1/JIP1 and MAPK8/JNK1. Interacts with SH3RF2. In terms of processing, phosphorylated at Ser-304 by AKT1 and AKT2. When phosphorylated, it has reduced ability to bind Rac. Autoubiquitinated. Ubiquitinated by SH3RF2, leading to proteasome-mediated degradation.

Its subcellular location is the cytoplasm. It localises to the perinuclear region. It is found in the cell projection. The protein resides in the lamellipodium. The protein localises to the golgi apparatus. Its subcellular location is the trans-Golgi network. The enzyme catalyses S-ubiquitinyl-[E2 ubiquitin-conjugating enzyme]-L-cysteine + [acceptor protein]-L-lysine = [E2 ubiquitin-conjugating enzyme]-L-cysteine + N(6)-ubiquitinyl-[acceptor protein]-L-lysine.. It functions in the pathway protein modification; protein ubiquitination. In terms of biological role, has E3 ubiquitin-protein ligase activity. In the absence of an external substrate, it can catalyze self-ubiquitination. Stimulates ubiquitination of potassium channel KCNJ1, enhancing it's dynamin-dependent and clathrin-independent endocytosis. Acts as a scaffold protein that coordinates with MAPK8IP1/JIP1 in organizing different components of the JNK pathway, including RAC1 or RAC2, MAP3K11/MLK3 or MAP3K7/TAK1, MAP2K7/MKK7, MAPK8/JNK1 and/or MAPK9/JNK2 into a functional multiprotein complex to ensure the effective activation of the JNK signaling pathway. Regulates the differentiation of CD4(+) and CD8(+) T-cells and promotes T-helper 1 (Th1) cell differentiation. Regulates the activation of MAPK8/JNK1 and MAPK9/JNK2 in CD4(+) T-cells and the activation of MAPK8/JNK1 in CD8(+) T-cells. Plays a crucial role in the migration of neocortical neurons in the developing brain. Controls proper cortical neuronal migration and the formation of proximal cytoplasmic dilation in the leading process (PCDLP) in migratory neocortical neurons by regulating the proper localization of activated RAC1 and F-actin assembly. (Microbial infection) Plays an essential role in the targeting of HIV-1 Gag to the plasma membrane, this function is dependent on it's RING domain, and hence it's E3 ligase activity. The protein is E3 ubiquitin-protein ligase SH3RF1 (SH3RF1) of Homo sapiens (Human).